A 464-amino-acid chain; its full sequence is MKIYNTMTRKKEEFVPVKPNEVQMYVCGPTVYNFFHIGNARTFIVFDTVRKYFEYRGYKVNFIQNFTDIDDKMIAKANNEGVSVKELGDRYIKEYYEDADGLNLERATCNPRATEYIGKIIDFVKGLQDEGYAYEIDGDVYFNTNAFKEYGKLSGQNLEDRMAGATIAVDDRKKSPADFALWKSEKPGEPSWESPWGKGRPGWHIECSCMARDLLGDTIDIHAGAIDLIFPHHENEIAQSEARTGKPFSKYWMHAAYLNINNEKMSKSLNNFLTARDILKEYDAEVIRLFLLSAHYRTPLNFTEESIEAAKTSLERLYNTINNLGSLLNNTAESNDDSEYLKALDSYREKFIEKMDDDFNTADGISVIFDLAKDINININGKSSKAAVEKAISLMRELGKPLGILQKVEKHNLEDEIQNLIEQRQNARKNKDWALADKIRDDLKERGIVLEDTPEGIRWKFIDK.

Cysteine 27 is a Zn(2+) binding site. A 'HIGH' region motif is present at residues 29 to 39 (PTVYNFFHIGN). Zn(2+) is bound by residues cysteine 207, histidine 232, and glutamate 236. The short motif at 264-268 (KMSKS) is the 'KMSKS' region element. Residue lysine 267 participates in ATP binding.

This sequence belongs to the class-I aminoacyl-tRNA synthetase family. Monomer. Requires Zn(2+) as cofactor.

Its subcellular location is the cytoplasm. The enzyme catalyses tRNA(Cys) + L-cysteine + ATP = L-cysteinyl-tRNA(Cys) + AMP + diphosphate. The polypeptide is Cysteine--tRNA ligase (Clostridium acetobutylicum (strain ATCC 824 / DSM 792 / JCM 1419 / IAM 19013 / LMG 5710 / NBRC 13948 / NRRL B-527 / VKM B-1787 / 2291 / W)).